The primary structure comprises 1579 residues: Pentafunctional AROM polypeptide (1579 aa).

A 3-dehydroquinate synthase region spans residues 1 to 383; the sequence is MLVKVPILGR…YGKSAHVVSD (383 aa). NAD(+) contacts are provided by residues 40-42, 75-78, 106-108, and D111; these read DSN, EANK, and GGI. 7-phospho-2-dehydro-3-deoxy-D-arabino-heptonate is bound at residue R122. 131-132 serves as a coordination point for NAD(+); that stretch reads TS. Residues D138 and K144 each contribute to the 7-phospho-2-dehydro-3-deoxy-D-arabino-heptonate site. NAD(+) is bound at residue K153. A 7-phospho-2-dehydro-3-deoxy-D-arabino-heptonate-binding site is contributed by N154. NAD(+) is bound by residues 171 to 174 and N182; that span reads WLQS. E186 contacts Zn(2+). Residues 186–189 and K249 each bind 7-phospho-2-dehydro-3-deoxy-D-arabino-heptonate; that span reads EVIK. E259 functions as the Proton acceptor; for 3-dehydroquinate synthase activity in the catalytic mechanism. Residues 263–267 and H270 each bind 7-phospho-2-dehydro-3-deoxy-D-arabino-heptonate; that span reads RNLLN. A Zn(2+)-binding site is contributed by H270. H274 functions as the Proton acceptor; for 3-dehydroquinate synthase activity in the catalytic mechanism. Positions 286 and 355 each coordinate 7-phospho-2-dehydro-3-deoxy-D-arabino-heptonate. Zn(2+) is bound at residue H286. Residues 396 to 862 form an EPSP synthase region; it reads VYPFNNIPRD…WDVLHTELGA (467 aa). The active-site For EPSP synthase activity is C844. The shikimate kinase stretch occupies residues 881 to 1071; sequence SVVIIGMRAA…IPTRRSAFVC (191 aa). 886 to 893 contributes to the ATP binding site; that stretch reads GMRAAGKT. The 3-dehydroquinase stretch occupies residues 1072–1284; that stretch reads LTFENLTEYT…AAPGQLTVAE (213 aa). The Proton acceptor; for 3-dehydroquinate dehydratase activity role is filled by H1189. K1218 functions as the Schiff-base intermediate with substrate; for 3-dehydroquinate dehydratase activity in the catalytic mechanism. Residues 1297–1579 form a shikimate dehydrogenase region; it reads KKDFFVVGSP…KAIYDAVTEI (283 aa).

It in the N-terminal section; belongs to the sugar phosphate cyclases superfamily. Dehydroquinate synthase family. In the 2nd section; belongs to the EPSP synthase family. This sequence in the 3rd section; belongs to the shikimate kinase family. The protein in the 4th section; belongs to the type-I 3-dehydroquinase family. It in the C-terminal section; belongs to the shikimate dehydrogenase family. In terms of assembly, homodimer. The cofactor is Zn(2+).

The protein resides in the cytoplasm. The catalysed reaction is 7-phospho-2-dehydro-3-deoxy-D-arabino-heptonate = 3-dehydroquinate + phosphate. It carries out the reaction 3-dehydroquinate = 3-dehydroshikimate + H2O. It catalyses the reaction shikimate + NADP(+) = 3-dehydroshikimate + NADPH + H(+). The enzyme catalyses shikimate + ATP = 3-phosphoshikimate + ADP + H(+). The catalysed reaction is 3-phosphoshikimate + phosphoenolpyruvate = 5-O-(1-carboxyvinyl)-3-phosphoshikimate + phosphate. It functions in the pathway metabolic intermediate biosynthesis; chorismate biosynthesis; chorismate from D-erythrose 4-phosphate and phosphoenolpyruvate: step 2/7. It participates in metabolic intermediate biosynthesis; chorismate biosynthesis; chorismate from D-erythrose 4-phosphate and phosphoenolpyruvate: step 3/7. Its pathway is metabolic intermediate biosynthesis; chorismate biosynthesis; chorismate from D-erythrose 4-phosphate and phosphoenolpyruvate: step 4/7. The protein operates within metabolic intermediate biosynthesis; chorismate biosynthesis; chorismate from D-erythrose 4-phosphate and phosphoenolpyruvate: step 5/7. It functions in the pathway metabolic intermediate biosynthesis; chorismate biosynthesis; chorismate from D-erythrose 4-phosphate and phosphoenolpyruvate: step 6/7. Functionally, the AROM polypeptide catalyzes 5 consecutive enzymatic reactions in prechorismate polyaromatic amino acid biosynthesis. In Candida glabrata (strain ATCC 2001 / BCRC 20586 / JCM 3761 / NBRC 0622 / NRRL Y-65 / CBS 138) (Yeast), this protein is Pentafunctional AROM polypeptide.